The chain runs to 646 residues: Ribonuclease Y (646 aa).

Residues 4 to 24 form a helical membrane-spanning segment; sequence VLVVLLSLVLVVLSVLILAVA. Disordered stretches follow at residues 43–62 and 69–118; these read PRTP…DFDE and LPAP…HGGS. The region spanning 336 to 402 is the KH domain; that stretch reads VVTVLHLPGD…RITLAALVSD (67 aa). Positions 462 to 555 constitute an HD domain; it reads VLAHLIESAH…TQAADQISGG (94 aa).

This sequence belongs to the RNase Y family.

The protein localises to the cell membrane. Functionally, endoribonuclease that initiates mRNA decay. The protein is Ribonuclease Y of Frankia casuarinae (strain DSM 45818 / CECT 9043 / HFP020203 / CcI3).